The primary structure comprises 115 residues: Large ribosomal subunit protein bL20 (115 aa).

Belongs to the bacterial ribosomal protein bL20 family.

In terms of biological role, binds directly to 23S ribosomal RNA and is necessary for the in vitro assembly process of the 50S ribosomal subunit. It is not involved in the protein synthesizing functions of that subunit. This chain is Large ribosomal subunit protein bL20, found in Synechococcus sp. (strain RCC307).